We begin with the raw amino-acid sequence, 90 residues long: Probable Fe(2+)-trafficking protein (90 aa).

The protein belongs to the Fe(2+)-trafficking protein family.

In terms of biological role, could be a mediator in iron transactions between iron acquisition and iron-requiring processes, such as synthesis and/or repair of Fe-S clusters in biosynthetic enzymes. The protein is Probable Fe(2+)-trafficking protein of Nitrosomonas eutropha (strain DSM 101675 / C91 / Nm57).